A 316-amino-acid chain; its full sequence is Na(+)/H(+) exchange regulatory cofactor NHE-RF2 (316 aa).

The 81-residue stretch at 11-91 (LCRLVRGEQG…ETRLLVVDKE (81 aa)) folds into the PDZ 1 domain. The disordered stretch occupies residues 109–148 (QRGLPPAHDPWEPKPDWARAGSLSSDAGQKDVNGPPRELR). 3 positions are modified to phosphoserine: Ser130, Ser183, and Ser254. The PDZ 2 domain maps to 151–231 (LCHLRKGPQG…EARLLLVDPE (81 aa)). A disordered region spans residues 244–303 (TEEHVEGPLPSPITNGTSPAQDASAWKRDPFQESGLHLSPTAAEAKEKARATRVNKRAPQ). Over residues 255–264 (PITNGTSPAQ) the composition is skewed to polar residues. Phosphoserine is present on Ser282.

In terms of assembly, homodimer, and heterodimer with NHERF1. Binds ADRB2, SLC9A3, P2RY1, P2YR2, SRY, RDX, PDZK1 and LPAR2. Found in a complex with EZR, PODXL and NHERF2. Interacts (via the PDZ domains) with PODXL (via the C-terminal PDZ-binding motif DTHL); interaction is detected in glomerular epithelium cells. Binds PODXL. Interacts with SGK1 and KCNJ1/ROMK1. Interacts (via the PDZ domains) with SLC26A6. In terms of tissue distribution, detected in kidney glomeruli.

Its subcellular location is the endomembrane system. It is found in the nucleus. The protein localises to the apical cell membrane. Scaffold protein that connects plasma membrane proteins with members of the ezrin/moesin/radixin family and thereby helps to link them to the actin cytoskeleton and to regulate their surface expression. Necessary for cAMP-mediated phosphorylation and inhibition of SLC9A3. May also act as scaffold protein in the nucleus. The sequence is that of Na(+)/H(+) exchange regulatory cofactor NHE-RF2 (NHERF2) from Oryctolagus cuniculus (Rabbit).